The chain runs to 771 residues: Dol-P-Glc:Glc(2)Man(9)GlcNAc(2)-PP-Dol alpha-1,2-glucosyltransferase (771 aa).

Transmembrane regions (helical) follow at residues 45-65, 160-180, 182-202, 221-241, 293-313, 326-346, and 357-377; these read FITASGFILIYFFARSWLALV, VSFYAYHTAINIALFPVIFFF, GLYYTDVASTLVMLVAYWNHL, VVLGVAALFMRQTNVFWVVVY, VDMAWPDDWALCLLSIGIAAL, HITIMGLFAGFVAWNGGVVLG, and LPQMLYIWPFFAFFSAPLLIP. Residues 392–449 form a disordered region; that stretch reads TPTPSHTTTKDPGRSSWRFTKPSITSKKSSTTKPPQRSGPTPASSSSSSSSFSPDTNS. Composition is skewed to low complexity over residues 411-426 and 435-449; these read TKPSITSKKSSTTKPP and SSSSSSSSFSPDTNS. N448 carries an N-linked (GlcNAc...) asparagine glycan. 2 helical membrane passes run 469-489 and 503-525; these read PFYLLATILLSAAIIHYNTII and YIFRYTILRSSLVRLALVAAYTL. Over residues 584-593 the composition is skewed to basic and acidic residues; sequence QKNIKDKQKE. The disordered stretch occupies residues 584–605; the sequence is QKNIKDKQKEVEEEEEEEEKED. The span at 594–604 shows a compositional bias: acidic residues; it reads VEEEEEEEEKE. Helical transmembrane passes span 631-651 and 656-676; these read TSTVLLWLLTTTLSLVTAPLV and FILPWVFYRLLVPAMPVSSSL. The tract at residues 682 to 708 is disordered; the sequence is SSSFASSTTESGNGDGNDAATAARQQQ. Residues 728–748 traverse the membrane as a helical segment; sequence LALETVWFLAINIGTMYMFLF.

This sequence belongs to the ALG10 glucosyltransferase family.

It is found in the endoplasmic reticulum membrane. The enzyme catalyses an alpha-D-Glc-(1-&gt;3)-alpha-D-Glc-(1-&gt;3)-alpha-D-Man-(1-&gt;2)-alpha-D-Man-(1-&gt;2)-alpha-D-Man-(1-&gt;3)-[alpha-D-Man-(1-&gt;2)-alpha-D-Man-(1-&gt;3)-[alpha-D-Man-(1-&gt;2)-alpha-D-Man-(1-&gt;6)]-alpha-D-Man-(1-&gt;6)]-beta-D-Man-(1-&gt;4)-beta-D-GlcNAc-(1-&gt;4)-alpha-D-GlcNAc-diphospho-di-trans,poly-cis-dolichol + a di-trans,poly-cis-dolichyl beta-D-glucosyl phosphate = a alpha-D-Glc-(1-&gt;2)-alpha-D-Glc-(1-&gt;3)-alpha-D-Glc-(1-&gt;3)-alpha-D-Man-(1-&gt;2)-alpha-D-Man-(1-&gt;2)-alpha-D-Man-(1-&gt;3)-[alpha-D-Man-(1-&gt;2)-alpha-D-Man-(1-&gt;3)-[alpha-D-Man-(1-&gt;2)-alpha-D-Man-(1-&gt;6)]-alpha-D-Man-(1-&gt;6)]-beta-D-Man-(1-&gt;4)-beta-D-GlcNAc-(1-&gt;4)-alpha-D-GlcNAc-diphospho-di-trans,poly-cis-dolichol + a di-trans,poly-cis-dolichyl phosphate + H(+). It participates in protein modification; protein glycosylation. Functionally, dol-P-Glc:Glc(2)Man(9)GlcNAc(2)-PP-Dol alpha-1,2-glucosyltransferase that operates in the biosynthetic pathway of dolichol-linked oligosaccharides, the glycan precursors employed in protein asparagine (N)-glycosylation. The assembly of dolichol-linked oligosaccharides begins on the cytosolic side of the endoplasmic reticulum membrane and finishes in its lumen. The sequential addition of sugars to dolichol pyrophosphate produces dolichol-linked oligosaccharides containing fourteen sugars, including two GlcNAcs, nine mannoses and three glucoses. Once assembled, the oligosaccharide is transferred from the lipid to nascent proteins by oligosaccharyltransferases. In the lumen of the endoplasmic reticulum, adds the third and last glucose residue from dolichyl phosphate glucose (Dol-P-Glc) onto the lipid-linked oligosaccharide intermediate Glc(2)Man(9)GlcNAc(2)-PP-Dol to produce Glc(3)Man(9)GlcNAc(2)-PP-Dol. The protein is Dol-P-Glc:Glc(2)Man(9)GlcNAc(2)-PP-Dol alpha-1,2-glucosyltransferase (alg-10) of Neurospora crassa (strain ATCC 24698 / 74-OR23-1A / CBS 708.71 / DSM 1257 / FGSC 987).